We begin with the raw amino-acid sequence, 208 residues long: Ribosomal RNA small subunit methyltransferase G (208 aa).

Residues Gly78, Phe83, 101 to 103 (ERS), 129 to 130 (IE), and Arg142 each bind S-adenosyl-L-methionine.

It belongs to the methyltransferase superfamily. RNA methyltransferase RsmG family.

The protein resides in the cytoplasm. Its function is as follows. Specifically methylates the N7 position of a guanine in 16S rRNA. This chain is Ribosomal RNA small subunit methyltransferase G, found in Borreliella burgdorferi (strain ATCC 35210 / DSM 4680 / CIP 102532 / B31) (Borrelia burgdorferi).